We begin with the raw amino-acid sequence, 248 residues long: Probable phosphatase VS_II0429 (248 aa).

H8, H10, H16, H41, E74, H102, H132, D194, and H196 together coordinate Zn(2+).

This sequence belongs to the PHP family. It depends on Zn(2+) as a cofactor.

The polypeptide is Probable phosphatase VS_II0429 (Vibrio atlanticus (strain LGP32) (Vibrio splendidus (strain Mel32))).